The primary structure comprises 206 residues: Amelogenin, Y isoform (206 aa).

Residues 1-16 form the signal peptide; it reads MGTWILFACLVGAAFA. The segment at 118-180 is disordered; that stretch reads VPGQQSMTPT…PPLPPMFPLR (63 aa). The segment covering 128–142 has biased composition (low complexity); sequence QHHQPNLPLPAQQPF. The segment covering 143 to 180 has biased composition (pro residues); sequence QPQPVQPQPHQPMQPQPPVQPMQPLLPQPPLPPMFPLR.

Belongs to the amelogenin family.

It localises to the secreted. The protein localises to the extracellular space. The protein resides in the extracellular matrix. Its function is as follows. Plays a role in biomineralization. Seems to regulate the formation of crystallites during the secretory stage of tooth enamel development. Thought to play a major role in the structural organization and mineralization of developing enamel. This chain is Amelogenin, Y isoform (AMELY), found in Homo sapiens (Human).